The primary structure comprises 194 residues: MHKWILTWILPTLLYRSCFHIICLVGTISLACNDMTPEQMATNVNCSSPERHTRSYDYMEGGDIRVRRLFCRTQWYLRIDKRGKVKGTQEMKNNYNIMEIRTVAVGIVAIKGVESEFYLAMNKEGKLYAKKECNEDCNFKELILENHYNTYASAKWTHNGGEMFVALNQKGIPVRGKKTKKEQKTAHFLPMAIT.

The first 31 residues, 1 to 31 (MHKWILTWILPTLLYRSCFHIICLVGTISLA), serve as a signal peptide directing secretion. N-linked (GlcNAc...) asparagine glycosylation occurs at N45.

Belongs to the heparin-binding growth factors family. Interacts with FGFBP1. Interacts with FGFR2. Affinity between fibroblast growth factors (FGFs) and their receptors is increased by heparan sulfate glycosaminoglycans that function as coreceptors. In terms of tissue distribution, epithelial cell.

It localises to the secreted. Plays an important role in the regulation of embryonic development, cell proliferation and cell differentiation. Required for normal branching morphogenesis. Growth factor active on keratinocytes. Possible major paracrine effector of normal epithelial cell proliferation. The sequence is that of Fibroblast growth factor 7 (FGF7) from Homo sapiens (Human).